The chain runs to 212 residues: Outer surface protein C (212 aa).

The N-terminal stretch at 1 to 18 is a signal peptide; it reads MKKNTLSAILMTLFLFIS. Residue cysteine 19 is the site of N-palmitoyl cysteine attachment. Cysteine 19 carries S-diacylglycerol cysteine lipidation.

It belongs to the OspC lipoprotein family. As to quaternary structure, homodimer. Interacts with tick Ixodes ricinus salivary protein Iric-1. Binds human (host) plasminogen. In terms of processing, the N-terminus is blocked.

It is found in the cell outer membrane. The protein localises to the cell surface. Major immunodominant protein in mammalian hosts. Required for initial stages of mammalian infection. Inhibits macrophage-mediated phagocytosis of the bacteria. Binds human plasminogen; this probably confers an extracellular protease activity on the bacteria that allows it to traverse tissue. Unlike closely related strain B31, its interaction with Ixodes ricinus salivary protein Iric-1 does not protect against antibody-mediated destruction in vitro. In Borreliella afzelii (strain PKo) (Borrelia afzelii), this protein is Outer surface protein C.